A 406-amino-acid chain; its full sequence is Probable endo-xylogalacturonan hydrolase A (406 aa).

The N-terminal stretch at 1–18 (MLYYRNLALLSLLSLSSA) is a signal peptide. PbH1 repeat units lie at residues 183–213 (AKDV…DIGS), 214–235 (STHV…ALKP), 237–257 (CNYV…SVGS), and 299–320 (VKNV…QIQS). Catalysis depends on D228, which acts as the Proton donor. N-linked (GlcNAc...) asparagine glycosylation is present at N244. Residue H251 is part of the active site. Residue N301 is glycosylated (N-linked (GlcNAc...) asparagine).

Belongs to the glycosyl hydrolase 28 family.

It is found in the secreted. Functionally, pectinolytic enzyme involved in the degradation of xylogalacturonan (xga), a galacturonan backbone heavily substituted with xylose, and which is one important component of the hairy regions of pectin. Activity requires a galacturonic acid backbone substituted with xylose. This Neosartorya fischeri (strain ATCC 1020 / DSM 3700 / CBS 544.65 / FGSC A1164 / JCM 1740 / NRRL 181 / WB 181) (Aspergillus fischerianus) protein is Probable endo-xylogalacturonan hydrolase A (xghA).